Reading from the N-terminus, the 526-residue chain is PTS system alpha-glucoside-specific EIICB component (526 aa).

One can recognise a PTS EIIC type-1 domain in the interval 1-417 (MLKHFQRLGG…YNVKTSGRED (417 aa)). Transmembrane regions (helical) follow at residues 12–32 (LFAP…TIIL), 59–79 (GWTV…IGLA), 88–108 (LAVL…LTFW), 132–152 (IKTL…TIYI), 173–193 (LVSA…CLVW), 200–220 (ISSL…LYTF), 224–244 (ILIP…GPAV), 274–294 (GGFA…ALAM), 305–325 (IVSG…ITEP), 330–350 (FLFI…TMAA), 355–375 (FGVV…WLPL), and 381–401 (GVMF…YLVF). Residues 447 to 526 (SGKAKAFLEA…ESFENLMEQN (80 aa)) enclose the PTS EIIB type-1 domain. Cys-469 acts as the Phosphocysteine intermediate; for EIIB activity in catalysis.

The protein localises to the cell membrane. Functionally, the phosphoenolpyruvate-dependent sugar phosphotransferase system (sugar PTS), a major carbohydrate active -transport system, catalyzes the phosphorylation of incoming sugar substrates concomitantly with their translocation across the cell membrane. This system is involved in alpha-glucoside transport. In Fusobacterium mortiferum, this protein is PTS system alpha-glucoside-specific EIICB component (malB).